Consider the following 708-residue polypeptide: Quinohemoprotein alcohol dehydrogenase (708 aa).

An N-terminal signal peptide occupies residues 1–31; sequence MERLIDNSHGWPGRMVWLLAACLGSAAAFAQ. Glu101 is a binding site for pyrroloquinoline quinone. Residues Cys147 and Cys148 are joined by a disulfide bond. Residues Arg153, Thr198, and 214 to 215 contribute to the pyrroloquinoline quinone site; that span reads GA. Glu216 is a binding site for Ca(2+). Thr274 contacts pyrroloquinoline quinone. Ca(2+) is bound by residues Asn294 and Asp339. Asp339 acts as the Proton acceptor in catalysis. Pyrroloquinoline quinone-binding positions include Lys366, 425-426, and Val575; that span reads NW. The Cytochrome c domain occupies 619 to 708; sequence YDPAKVEAGT…GTADAIRPKP (90 aa). Residues Cys635, Cys638, His639, and Met678 each contribute to the heme c site.

Belongs to the bacterial PQQ dehydrogenase family. Monomer. The cofactor is pyrroloquinoline quinone. Requires Ca(2+) as cofactor. Heme c is required as a cofactor. In terms of processing, in the crystallographic structures Trp-543 is oxidized to 2'-hydroxytryptophan.

The protein localises to the periplasm. It catalyses the reaction 2 oxidized [azurin] + a primary alcohol = 2 reduced [azurin] + an aldehyde + 2 H(+). Its function is as follows. Catalyzes the dye-linked oxidation of primary alcohols to the corresponding aldehydes and the (subsequent) oxidation of the aldehydes to carboxylic acids. Methanol is not a substrate. This chain is Quinohemoprotein alcohol dehydrogenase, found in Comamonas testosteroni (Pseudomonas testosteroni).